We begin with the raw amino-acid sequence, 158 residues long: NADH-quinone oxidoreductase subunit B (158 aa).

[4Fe-4S] cluster is bound by residues Cys37, Cys38, Cys102, and Cys132.

This sequence belongs to the complex I 20 kDa subunit family. As to quaternary structure, NDH-1 is composed of 14 different subunits. Subunits NuoB, C, D, E, F, and G constitute the peripheral sector of the complex. Requires [4Fe-4S] cluster as cofactor.

The protein localises to the cell inner membrane. It carries out the reaction a quinone + NADH + 5 H(+)(in) = a quinol + NAD(+) + 4 H(+)(out). In terms of biological role, NDH-1 shuttles electrons from NADH, via FMN and iron-sulfur (Fe-S) centers, to quinones in the respiratory chain. The immediate electron acceptor for the enzyme in this species is believed to be ubiquinone. Couples the redox reaction to proton translocation (for every two electrons transferred, four hydrogen ions are translocated across the cytoplasmic membrane), and thus conserves the redox energy in a proton gradient. The sequence is that of NADH-quinone oxidoreductase subunit B from Halorhodospira halophila (strain DSM 244 / SL1) (Ectothiorhodospira halophila (strain DSM 244 / SL1)).